Reading from the N-terminus, the 509-residue chain is Pentatricopeptide repeat-containing protein At2g13420, mitochondrial (509 aa).

Residues 1 to 19 constitute a mitochondrion transit peptide; that stretch reads MLLLKQISPPFHLHQLRRR. 8 PPR repeats span residues 172 to 202, 206 to 240, 241 to 285, 286 to 320, 321 to 355, 356 to 390, 391 to 425, and 426 to 460; these read RLVEFGFLLDTLCKYGYTKMAVGVFNERKEE, DEKVYTILIAGWCKLRRIDMAEKFLVEMIESGIEP, NVVT…GIEP, DVTSFSIVLHMYSRAHKAELTLDKMKLMKAKGISP, TIETYTSVVKCLCSCGRLEEAEELLETMVESGISP, SSATYNCFFKEYKGRKDANGAMNLYRKMKNGLCKP, STQTYNVLLGTFINLGKMETVKEIWDDLKASETGP, and DLDSYTSLVHGLCSKEKWKEACGYFVEMIERGFLP.

The protein belongs to the PPR family. P subfamily.

Its subcellular location is the mitochondrion. In Arabidopsis thaliana (Mouse-ear cress), this protein is Pentatricopeptide repeat-containing protein At2g13420, mitochondrial.